The chain runs to 330 residues: LIM domain-containing protein pin-2 (330 aa).

LIM zinc-binding domains follow at residues 21–73 (CERC…CEHD), 82–132 (CAKC…CFLC), 144–194 (CNKC…CPRC), 202–255 (CFDC…CRDD), and 264–315 (CFIC…CKKC).

In terms of tissue distribution, expressed in neurons and intestine.

It is found in the cytoplasm. The protein localises to the nucleus. The sequence is that of LIM domain-containing protein pin-2 (pin-2) from Caenorhabditis elegans.